The primary structure comprises 249 residues: Phosphate import ATP-binding protein PstB (249 aa).

The region spanning 4–244 is the ABC transporter domain; sequence VKIKDLSLFY…PQDKRTEDYI (241 aa). Residue 36–43 coordinates ATP; the sequence is GPSGCGKS.

It belongs to the ABC transporter superfamily. Phosphate importer (TC 3.A.1.7) family. The complex is composed of two ATP-binding proteins (PstB), two transmembrane proteins (PstC and PstA) and a solute-binding protein (PstS).

It localises to the cell membrane. It catalyses the reaction phosphate(out) + ATP + H2O = ADP + 2 phosphate(in) + H(+). Functionally, part of the ABC transporter complex PstSACB involved in phosphate import. Responsible for energy coupling to the transport system. This is Phosphate import ATP-binding protein PstB from Clostridium tetani (strain Massachusetts / E88).